Reading from the N-terminus, the 574-residue chain is FAD-linked oxidoreductase penH (574 aa).

An N-terminal signal peptide occupies residues 1–25 (MLPRALTLSALLALLLAIYLALAPA). N-linked (GlcNAc...) asparagine glycans are attached at residues asparagine 48, asparagine 107, asparagine 193, asparagine 368, and asparagine 385. The FAD-binding PCMH-type domain occupies 121-305 (HQGRIPLYAA…VRVTMRTYPD (185 aa)).

The protein belongs to the oxygen-dependent FAD-linked oxidoreductase family. It depends on FAD as a cofactor.

It catalyses the reaction peniprequinolone + A = yaequinolone E + AH2. It functions in the pathway secondary metabolite biosynthesis. The protein operates within alkaloid biosynthesis. It participates in mycotoxin biosynthesis. Its function is as follows. FAD-linked oxidoreductase; part of the gene cluster that mediates the biosynthesis of penigequinolones, potent insecticidal alkaloids that contain a highly modified 10-carbon prenyl group. The first stage is catalyzed by the nonribosomal peptide synthetase penN that condenses anthranilic acid and O-methyl-L-tyrosine to produce 4'-methoxycyclopeptin. 4'-methoxycyclopeptin is then converted to 4'-methoxydehydrocyclopeptin by the ketoglutarate-dependent dioxygenase penM through dehydrogenation to form a double bond between C-alpha and C-beta of the O-methyltyrosine side chain. PenM also converts its first product methoxydehydrocyclopeptin to 4'-methoxycyclopenin. The following conversion of 4'methoxycyclopenin into 4'-methoxyviridicatin is catalyzed by the cyclopenase penL. 4'-methoxyviridicatin is the precursor of quinolone natural products, and is further converted to quinolinone B. The prenyltransferase penI then catalyzes the canonical Friedel-Crafts alkylation of quinolinone B with dimethylallyl cation to yield dimethylallyl quinolone, which is subjected to FAD-dependent dehydrogenation by the FAD-linked oxidoreductase penH to yield conjugated aryl diene. The delta(3') double bond then serves as the site of the second alkylation with DMAPP catalyzed by the prenyltransferase penG to yield a carbenium ion intermediate, which can be attacked by H(2)O to yield a styrenyl quinolone containing a C3'-hydroxyprenyl chain, or undergo cyclization to yield yaequinolones J1 and J2. The conversion of the styrenyl quinolone into the tetrahydrofuran-containing yaequinolone C is performed by the FAD-dependent monooxygenase penE and involves epoxidation of the terminal C7'-C8' olefin, followed by epoxide ring opening initiated by the C3' hydroxyl group. The predicted cysteine hydrolase penJ acts as an epoxide hydrolase that enhances the rate of the 5-exo-tet cyclization step, increasing the yield of yaequinolone C. PenF catalyzes the cationic rearrangement of the epoxide formed by penE (before ring opening to produce yaequinolone C) into yaequinolone D. Finally, the short-chain dehydrogenase/reductase (SDR)-like reductase penD, catalyzes both the dehydration of yaequinolone D and the reduction of the resulting oxonium to yield penigequinolone. The protein is FAD-linked oxidoreductase penH of Penicillium thymicola.